We begin with the raw amino-acid sequence, 333 residues long: Serine proteinase inhibitor 2 (333 aa).

This sequence belongs to the serpin family. Poxviruses subfamily.

Its subcellular location is the host cytoplasm. In terms of biological role, weak inhibitor of the interleukin-1-beta converting enzyme (ICE) and of granzyme B. Does not form a stable complex with ICE, but can for a stable complex with granzyme B. The chain is Serine proteinase inhibitor 2 (SERP2) from Myxoma virus (strain Uriarra) (MYXV).